The chain runs to 233 residues: 1-(5-phosphoribosyl)-5-[(5-phosphoribosylamino)methylideneamino] imidazole-4-carboxamide isomerase (233 aa).

The active-site Proton acceptor is aspartate 8. The active-site Proton donor is the aspartate 125.

This sequence belongs to the HisA/HisF family.

Its subcellular location is the cytoplasm. It catalyses the reaction 1-(5-phospho-beta-D-ribosyl)-5-[(5-phospho-beta-D-ribosylamino)methylideneamino]imidazole-4-carboxamide = 5-[(5-phospho-1-deoxy-D-ribulos-1-ylimino)methylamino]-1-(5-phospho-beta-D-ribosyl)imidazole-4-carboxamide. The protein operates within amino-acid biosynthesis; L-histidine biosynthesis; L-histidine from 5-phospho-alpha-D-ribose 1-diphosphate: step 4/9. This Thermococcus kodakarensis (strain ATCC BAA-918 / JCM 12380 / KOD1) (Pyrococcus kodakaraensis (strain KOD1)) protein is 1-(5-phosphoribosyl)-5-[(5-phosphoribosylamino)methylideneamino] imidazole-4-carboxamide isomerase.